The following is a 342-amino-acid chain: MKALSKLKAEVGIWMTDVPAPELGHNDLLIKIRKTAICGTDMHIYNWDEWAQKTIPVPMVVGHEYVGEVVAVGQEVRGFAVGDRVSGEGHITCGHCRNCRAGRTHLCRNTIGVGVNRPGSFAEYLVIPAFNAFKLPDNIPDELAAIFDPFGNAVHTALSFDLVGEDVLITGAGPIGIMAAAVCRHVGARHVVITDVNEYRLELARKMGATRAVNVSKEKLADVMSALGMTEGFDVGLEMSGVPSAFQDMIDKMNHGGKIAMLGIPPSTMAIDWNKVIFKGLFIKGIYGREMFETWYKMASLIQSGLDLTPIITHHFHIDDFQQGFEAMGSGKSGKVILSWDK.

C38 serves as a coordination point for Zn(2+). Active-site charge relay system residues include T40 and H43. Zn(2+) is bound by residues H63, E64, C93, C96, C99, and C107. Residues I175, D195, R200, 262–264, and 286–287 contribute to the NAD(+) site; these read LGI and IY.

The protein belongs to the zinc-containing alcohol dehydrogenase family. As to quaternary structure, homotetramer. Zn(2+) is required as a cofactor.

The protein resides in the cytoplasm. The catalysed reaction is L-threonine + NAD(+) = (2S)-2-amino-3-oxobutanoate + NADH + H(+). It participates in amino-acid degradation; L-threonine degradation via oxydo-reductase pathway; glycine from L-threonine: step 1/2. In terms of biological role, catalyzes the NAD(+)-dependent oxidation of L-threonine to 2-amino-3-ketobutyrate. The polypeptide is L-threonine 3-dehydrogenase (Aeromonas salmonicida (strain A449)).